Here is a 139-residue protein sequence, read N- to C-terminus: GSK3-beta interaction protein (139 aa).

Residues 1-22 (METDCNPMELSSMSGFEEGSEL) are disordered. The interval 41-45 (VNDVL) is required for PRKAR2A interaction; contributes to a protective effect against H(2)O(2)-induced apoptosis. Positions 115–139 (SPAYREAFGNALLQRLEALKRDGQS) are interaction with GSK3B and acts as a GSK3B inhibitor.

This sequence belongs to the GSKIP family. In terms of assembly, forms a complex composed of PRKAR2A or PRKAR2B, GSK3B and GSKIP through GSKIP interaction; facilitates PKA-induced phosphorylation of GSK3B leading to GSK3B inactivation; recruits DNM1L through GSK3B for PKA-mediated phosphorylation of DNM1L; promotes beta-catenin degradation through GSK3B-induced phosphorylation of beta-catenin; stabilizes beta-catenin and enhances Wnt-induced signaling through PKA-induced phosphorylation of beta-catenin. Interacts with GSK3B; induces GSK3B-mediated phosphorylation of GSKIP and inhibits GSK3B kinase activity. In terms of processing, phosphorylated by GSK3B.

The protein localises to the cytoplasm. Its subcellular location is the nucleus. In terms of biological role, A-kinase anchoring protein for GSK3B and PKA that regulates or facilitates their kinase activity towards their targets. The ternary complex enhances Wnt-induced signaling by facilitating the GSK3B- and PKA-induced phosphorylation of beta-catenin leading to beta-catenin degradation and stabilization respectively. Upon cAMP activation, the ternary complex contributes to neuroprotection against oxidative stress-induced apoptosis by facilitating the PKA-induced phosphorylation of DML1 and PKA-induced inactivation of GSK3B. During neurite outgrowth promotes neuron proliferation; while increases beta-catenin-induced transcriptional activity through GSK3B kinase activity inhibition, reduces N-cadherin level to promote cell cycle progression. May play a role in cleft palate formation and is required for postnatal life through modulation of the activity of GSK3B during development. This Macaca fascicularis (Crab-eating macaque) protein is GSK3-beta interaction protein.